Reading from the N-terminus, the 314-residue chain is Ferric-anguibactin transport system permease protein FatD (314 aa).

Transmembrane regions (helical) follow at residues 1–21 (MTFRMILAFFTLCATSLFFGA), 49–69 (VALILTGSGLAMCGVILQHIV), 76–96 (PGTTGSLDAAKLGILVSIVML), 103–123 (ERMFFAVLFCFAAGLVYIAII), 132–152 (ALVPVIGLMFGSVLSALAEFY), 180–200 (IIFLILPITLLTYLYAHRFTV), 207–226 (IASNLGISYAMTAALGLILV), 230–252 (VAVTVVTVGAIHFVGLVIPNLVA), 265–285 (IVALGGASLLIFCDVISRVVL), and 288–308 (FEVPVGLTASAVGGVMFLAFL).

Belongs to the binding-protein-dependent transport system permease family. FecCD subfamily. As to quaternary structure, part of an iron transport system composed of the outer membrane receptor FatA, the periplasmic binding protein FatB and the inner membrane proteins FatC and FatD.

The protein resides in the cell inner membrane. In terms of biological role, involved in the uptake of iron in complex with the siderophore anguibactin. Responsible for the translocation of ferric-anguibactin across the cytoplasmic membrane. The chain is Ferric-anguibactin transport system permease protein FatD from Vibrio anguillarum (strain ATCC 68554 / 775) (Listonella anguillarum).